The primary structure comprises 403 residues: ATP phosphoribosyltransferase regulatory subunit (403 aa).

Belongs to the class-II aminoacyl-tRNA synthetase family. HisZ subfamily. In terms of assembly, heteromultimer composed of HisG and HisZ subunits.

Its subcellular location is the cytoplasm. It functions in the pathway amino-acid biosynthesis; L-histidine biosynthesis; L-histidine from 5-phospho-alpha-D-ribose 1-diphosphate: step 1/9. In terms of biological role, required for the first step of histidine biosynthesis. May allow the feedback regulation of ATP phosphoribosyltransferase activity by histidine. This chain is ATP phosphoribosyltransferase regulatory subunit, found in Crocosphaera subtropica (strain ATCC 51142 / BH68) (Cyanothece sp. (strain ATCC 51142)).